The chain runs to 474 residues: PRAME family member 10 (474 aa).

One copy of the LRR 1; degenerate repeat lies at 97-124; that stretch reads RWKLQVLDLRDVDENFWTIWSGARVLSC. One copy of the LRR 2; degenerate repeat lies at 179–203; the sequence is HLCCSKVQNYSMPTSSFRNLLERIY. The LRR 3; degenerate repeat unit spans residues 204-230; that stretch reads PDSIQELEVWKKCSLNKTGKFAPYLSQ. The stretch at 231–265 is one LRR 4; degenerate repeat; the sequence is MSNLRELFLAFGYERELYVSVQWPCIPDLDSPFLC. LRR repeat units follow at residues 266–291, 292–323, 324–342, 348–375, and 376–400; these read LYYP…LRYL, KNPL…SQLK, ELRL…PLGV, AATL…ALSH, and CSQL…LLRH.

It belongs to the PRAME family.

The sequence is that of PRAME family member 10 from Homo sapiens (Human).